Here is a 498-residue protein sequence, read N- to C-terminus: MRINPTTSDPGVSALEKKNLGRIAQIIGPVLDVTFPPRKMPNIYNALVVKGRDTAGQQINVTCEVQQLLGNNRVRAVAMSATDGLMRGMEVIDTGAPLSVPVGGATLGRIFNVLGEPVDNLGPVDTRTTSPIHRSAPAFIQLDTKLSIFETGIKVVDLLAPYRRGGKIGLFGGAGVGKTVLIMELINNIAKAHGGVSVFGGVGERTREGNDLYMEMKESGVINEQNIAESKVALVYGQMNEPPGARMRVGLTALTMAEYFRDVNEQDVLLFIDNIFRFVQAGSEVSALLGRMPSAVGYQPTLSTEMGSLQERITSTKEGSITSIQAVYVPADDLTDPAPATTFAHLDATTVLSRGLAAKGIYPAVDPLDSTSTMLQPRIVGEEHYETAQRVKQTLQRYKELQDIIAILGLDELSEEDRLTVARARKIERFLSQPFFVAEVFTGSPGKYVGLSETIRGFKLILSGELDGLPEQAFYLVGNIDEATAKATNLEMESKLKQ.

Glycine 172–threonine 179 is an ATP binding site.

Belongs to the ATPase alpha/beta chains family. F-type ATPases have 2 components, CF(1) - the catalytic core - and CF(0) - the membrane proton channel. CF(1) has five subunits: alpha(3), beta(3), gamma(1), delta(1), epsilon(1). CF(0) has four main subunits: a(1), b(1), b'(1) and c(9-12).

The protein localises to the plastid. The protein resides in the chloroplast thylakoid membrane. The enzyme catalyses ATP + H2O + 4 H(+)(in) = ADP + phosphate + 5 H(+)(out). Produces ATP from ADP in the presence of a proton gradient across the membrane. The catalytic sites are hosted primarily by the beta subunits. This is ATP synthase subunit beta, chloroplastic from Castanea sativa (Sweet chestnut).